The following is a 1954-amino-acid chain: Protein abnormal spindle (1954 aa).

The disordered stretch occupies residues 134–155 (VKNPRKFPTVGKTLQLKSPTGA). A phosphoserine mark is found at S151 and S360. T364 is subject to Phosphothreonine. S388, S390, S395, S398, S491, S495, S497, S501, S504, and S514 each carry phosphoserine. A disordered region spans residues 476 to 548 (KSVKGSPVKN…SSSAHAWPHA (73 aa)). Residues 498–507 (DAPSNESLYR) show a composition bias toward polar residues. The span at 528-548 (RSAAPANASARSSSAHAWPHA) shows a compositional bias: low complexity. The Calponin-homology (CH) domain occupies 836–968 (KETKDILLRF…LLWQLIYKFR (133 aa)). IQ domains are found at residues 1004–1033 (RHRA…ERTQ), 1386–1415 (TQAA…QLRQ), and 1467–1496 (QREA…KQRQ). Residues 1614–1641 (RANRSMKQARQEFVQLRTIAVHLQQKFR) adopt a coiled-coil conformation. IQ domains follow at residues 1656-1687 (LRCS…MMDL) and 1690-1721 (QKRA…IRKR).

Its subcellular location is the cytoplasm. It is found in the nucleus. The protein localises to the cytoskeleton. It localises to the spindle. The protein resides in the microtubule organizing center. Its subcellular location is the perinuclear region. Its function is as follows. Required to maintain the structure of the centrosomal microtubule organizing center (MTOC) during mitosis. May have a preferential role in regulating neurogenesis. Required for germ cell mitosis and oocyte differentiation. In Drosophila melanogaster (Fruit fly), this protein is Protein abnormal spindle.